We begin with the raw amino-acid sequence, 188 residues long: Probable manganese efflux pump MntP (188 aa).

Transmembrane regions (helical) follow at residues 3-23 (ITAT…ASIG), 66-86 (LEWN…RMII), 106-128 (WLLV…GLAF), 143-163 (ATLI…SIIG), and 168-188 (ILGG…HFHG).

The protein belongs to the MntP (TC 9.B.29) family.

It is found in the cell inner membrane. Its function is as follows. Probably functions as a manganese efflux pump. The polypeptide is Probable manganese efflux pump MntP (Escherichia coli O139:H28 (strain E24377A / ETEC)).